The primary structure comprises 138 residues: Large ribosomal subunit protein bL19 (138 aa).

Belongs to the bacterial ribosomal protein bL19 family.

In terms of biological role, this protein is located at the 30S-50S ribosomal subunit interface and may play a role in the structure and function of the aminoacyl-tRNA binding site. This is Large ribosomal subunit protein bL19 (rplS) from Rickettsia prowazekii (strain Madrid E).